The sequence spans 323 residues: MSNIQNHQKVVLVGDGAVGSSYAFAMAEEGIAEEFVIVDVVKVRTVGDALDLEDATPFTAPKNIYSGEYSDCKDADLVVITAGAPQKPGETRLDLVNKNLNILSTILKPVVDSGFDGIFLVAANPVDILTYATWKFSGFPKEKVIGSGISLDTARLRVALGKKFNVSPESVDAYILGEHGDSEFAAYSSATIGTKPLLEIAKEEGVSTDELAEIEDSVRNKAYEIINKKGATFYGVGTALMRISKAILRDENAVLPVGAYMDGEYGLNDIYIGTPAVINGQGLNRVIEAPLSDDEKKKMTDSATTLKKVLTDGLNALAEKQDK.

Residues Val-18, Asp-39, Arg-44, Tyr-69, and 83–84 contribute to the NAD(+) site; that span reads GA. Substrate contacts are provided by Gln-86 and Arg-92. NAD(+) contacts are provided by residues Thr-105, 122–124, and Ser-147; that span reads AAN. Position 124–127 (124–127) interacts with substrate; sequence NPVD. A substrate-binding site is contributed by 152 to 155; the sequence is DTAR. His-179 functions as the Proton acceptor in the catalytic mechanism. Position 223 is a phosphotyrosine (Tyr-223). Thr-232 lines the substrate pocket.

This sequence belongs to the LDH/MDH superfamily. LDH family. As to quaternary structure, homotetramer.

It localises to the cytoplasm. It catalyses the reaction (S)-lactate + NAD(+) = pyruvate + NADH + H(+). It functions in the pathway fermentation; pyruvate fermentation to lactate; (S)-lactate from pyruvate: step 1/1. Functionally, catalyzes the conversion of lactate to pyruvate. In Pediococcus acidilactici, this protein is L-lactate dehydrogenase.